The primary structure comprises 260 residues: Indole-3-glycerol phosphate synthase (260 aa).

It belongs to the TrpC family.

The catalysed reaction is 1-(2-carboxyphenylamino)-1-deoxy-D-ribulose 5-phosphate + H(+) = (1S,2R)-1-C-(indol-3-yl)glycerol 3-phosphate + CO2 + H2O. The protein operates within amino-acid biosynthesis; L-tryptophan biosynthesis; L-tryptophan from chorismate: step 4/5. In Thermoanaerobacter pseudethanolicus (strain ATCC 33223 / 39E) (Clostridium thermohydrosulfuricum), this protein is Indole-3-glycerol phosphate synthase.